We begin with the raw amino-acid sequence, 342 residues long: Succinoglycan biosynthesis protein ExoU (342 aa).

It belongs to the glycosyltransferase 2 family.

Its subcellular location is the cytoplasm. It functions in the pathway glycan metabolism; exopolysaccharide biosynthesis. Functionally, glycosyltransferase required for the synthesis of succinoglycan (EPS I). Needed for the addition of the sixth sugar (glucose), catalyzes the formation of a beta-1,6 linkage between the fifth and sixth sugar. The protein is Succinoglycan biosynthesis protein ExoU (exoU) of Rhizobium meliloti (strain 1021) (Ensifer meliloti).